We begin with the raw amino-acid sequence, 224 residues long: 7-cyano-7-deazaguanine synthase (224 aa).

10-20 contacts ATP; that stretch reads LSGGLDSATVV. C189, C199, C202, and C205 together coordinate Zn(2+).

The protein belongs to the QueC family. The cofactor is Zn(2+).

The catalysed reaction is 7-carboxy-7-deazaguanine + NH4(+) + ATP = 7-cyano-7-deazaguanine + ADP + phosphate + H2O + H(+). It participates in purine metabolism; 7-cyano-7-deazaguanine biosynthesis. Functionally, catalyzes the ATP-dependent conversion of 7-carboxy-7-deazaguanine (CDG) to 7-cyano-7-deazaguanine (preQ(0)). This chain is 7-cyano-7-deazaguanine synthase, found in Pseudomonas aeruginosa (strain LESB58).